We begin with the raw amino-acid sequence, 377 residues long: Geranylgeranyl transferase type-1 subunit beta (377 aa).

PFTB repeat units follow at residues 144-186, 193-234, 245-284, and 291-333; these read KEAC…YMLN, MKKA…CLMG, LNRI…KLLK, and FEKN…SLME. Residues 219–221 and 263–266 contribute to the geranylgeranyl diphosphate site; these read HGG and RPNK. Positions 269 and 271 each coordinate Zn(2+). 272 to 275 serves as a coordination point for geranylgeranyl diphosphate; that stretch reads YSFW. Histidine 321 contacts Zn(2+).

Belongs to the protein prenyltransferase subunit beta family. In terms of assembly, heterodimer of FNTA and PGGT1B. PGGT1B mediates interaction with substrate peptides. The cofactor is Zn(2+). Mg(2+) is required as a cofactor.

The enzyme catalyses geranylgeranyl diphosphate + L-cysteinyl-[protein] = S-geranylgeranyl-L-cysteinyl-[protein] + diphosphate. In terms of biological role, catalyzes the transfer of a geranylgeranyl moiety from geranylgeranyl diphosphate to a cysteine at the fourth position from the C-terminus of proteins with the C-terminal sequence Cys-aliphatic-aliphatic-X. Known substrates include RAC1, RAC2, RAP1A and RAP1B. This Rattus norvegicus (Rat) protein is Geranylgeranyl transferase type-1 subunit beta (Pggt1b).